The chain runs to 89 residues: UPF0367 protein P9515_01381 (89 aa).

It belongs to the UPF0367 family.

This chain is UPF0367 protein P9515_01381, found in Prochlorococcus marinus (strain MIT 9515).